The following is a 176-amino-acid chain: Magnesium-dependent phosphatase 1 (176 aa).

D11 (nucleophile) is an active-site residue. D11 is a Mg(2+) binding site. Residues L12 and D13 each contribute to the phosphate site. D13 provides a ligand contact to Mg(2+). The active-site Proton donor is the D13. W20 contributes to the substrate binding site. S69, R70, and K100 together coordinate phosphate. R70 contacts substrate. Mg(2+) is bound at residue D123.

It belongs to the HAD-like hydrolase superfamily. The cofactor is Mg(2+).

The catalysed reaction is O-phospho-L-tyrosyl-[protein] + H2O = L-tyrosyl-[protein] + phosphate. Its activity is regulated as follows. Inhibited by vanadate and zinc, and slightly by calcium. Its function is as follows. Magnesium-dependent phosphatase which may act as a tyrosine phosphatase. This Homo sapiens (Human) protein is Magnesium-dependent phosphatase 1 (MDP1).